A 217-amino-acid chain; its full sequence is Adenylate kinase (217 aa).

10 to 15 (GAGKGT) contributes to the ATP binding site. The NMP stretch occupies residues 30-59 (STGDMFRAAMKNETELGLKAKSFIDAGDLV). Residues Thr31, Arg36, 57-59 (DLV), 85-88 (GFPR), and Gln92 each bind AMP. An LID region spans residues 126–163 (GRRVSPTTGKTYHIVYNPPKVEGKCDIDGSDLIQRDDD). Residues Arg127 and 136 to 137 (TY) contribute to the ATP site. AMP-binding residues include Arg160 and Arg171. Gln199 provides a ligand contact to ATP.

Belongs to the adenylate kinase family. As to quaternary structure, monomer.

It localises to the cytoplasm. It catalyses the reaction AMP + ATP = 2 ADP. It functions in the pathway purine metabolism; AMP biosynthesis via salvage pathway; AMP from ADP: step 1/1. In terms of biological role, catalyzes the reversible transfer of the terminal phosphate group between ATP and AMP. Plays an important role in cellular energy homeostasis and in adenine nucleotide metabolism. The chain is Adenylate kinase from Shouchella clausii (strain KSM-K16) (Alkalihalobacillus clausii).